The primary structure comprises 293 residues: Protease HtpX (293 aa).

Helical transmembrane passes span Ile4–Leu24 and Gly34–Ser54. His139 contacts Zn(2+). Glu140 is an active-site residue. A Zn(2+)-binding site is contributed by His143. Helical transmembrane passes span Ile158–Leu178 and Met193–Ile213. Residue Glu222 coordinates Zn(2+).

Belongs to the peptidase M48B family. Requires Zn(2+) as cofactor.

It localises to the cell inner membrane. The protein is Protease HtpX of Pectobacterium atrosepticum (strain SCRI 1043 / ATCC BAA-672) (Erwinia carotovora subsp. atroseptica).